A 101-amino-acid chain; its full sequence is Putative defensin-like protein 307 (101 aa).

Positions 1-22 (MEKSALIFIGILLFSTCTSIMA) are cleaved as a signal peptide. Intrachain disulfides connect C29/C49, C35/C54, and C40/C56.

This sequence belongs to the DEFL family.

Its subcellular location is the secreted. In Arabidopsis thaliana (Mouse-ear cress), this protein is Putative defensin-like protein 307.